A 703-amino-acid chain; its full sequence is MSSDLVMPALGRPFTLGMLYDTRREKLIPGFSLFGDETLQQYQSSNTQRSSEFKIVASDSTESKSSAMDIEASLGVSFLGGLVEVGGSAKYLNNTKKYQNQSRVTLKYKATTIYKQFTAPPGTVKVQETVITQRGLATHVVTGILYGANAFFVFDSDKVEDTNLQDIQGKMEAVIKKIPTISIEGSASVQLTDEEKSLASNLSCKFHGDFLLESLPTTFEDAVTTYQTLPTLLGEDGASAVPMKVWLVPLKKFFSKAKLLTQEITVSKVRRIHTTLEELYKLKRRANEAMDDKLVQQIPLIHDKISNFHQIFQDYMLTVQKKIAEKLPLVRAGTESEQSLQKIIDDRAKSPFSNENVSTWLEVIEREIAVLKSCAGMVEGTQAKFVSNQTELDREVLAEDVKHALCFVFTSVERNDPYLKVLSDYLESPDSKDGKEAVPSTEDKWCFSTRVVLKMKQRAQTFCDHVNDFEKSRNVGFFVTALENGKFQGASIYHYKDGSLATQDFTFPRMPFVQGYKKRSDLLWYACDLTFDRNTINIWVSLSDNDTFAASEHGKRQNYPKHPERFLCYNQVLCNEGLTGKHYWEVEWNGYVDVGVAYISISRKEDNWVSAIGHNTCSWVFSSIPRAGYVERYNQRQYYVTVPTPGFKQLGVFLNWPDGSLSFYAVSSDEVHHLHTFKTKFTEPVYPAFCLGYRFDHGTVRLL.

At serine 2 the chain carries N-acetylserine. One can recognise a B30.2/SPRY domain in the interval 508–703; sequence PRMPFVQGYK…RFDHGTVRLL (196 aa).

The protein belongs to the SNTX/VTX toxin family. As to quaternary structure, heterodimer of alpha and beta subunits. Post-translationally, not glycosylated. In terms of processing, four intrachain disulfide linkages are present in the heterodimer. No interchain disulfide bound links the two subunits. Expressed by the venom gland.

It localises to the secreted. Its function is as follows. Has hemolytic and lethal activities. Its hemolytic activity is inhibited by anionic lipids, especially potently by cardiolipin. This Synanceia verrucosa (Reef stonefish) protein is Neoverrucotoxin subunit alpha.